The primary structure comprises 252 residues: MQICLMDETGATDGALSVLAARWGLEHDEDNPMALVLTPQYLELRKRDEPKLGGIFVDFVGGAMAHRRKFGGGRGEAVAKAVGIKGDYLPDVVDATAGLGRDAFVLASVGCRVRMLERNPVVAALLDDGLTRGYADADIGGWLQERLQLIHASSLTALTDITPRPQVVYLDPMFPHRQKSALVKKEMRVFQSLVGPDLDADGLLEPARQLATKRVVVKRPDYAPPLADVATPNAIVTKGHRFDIYAGTPLTE.

S-adenosyl-L-methionine is bound by residues 101 to 102 (RD), 117 to 118 (ER), 153 to 154 (SS), and Asp-171.

It belongs to the methyltransferase superfamily. RsmJ family.

The protein localises to the cytoplasm. The catalysed reaction is guanosine(1516) in 16S rRNA + S-adenosyl-L-methionine = N(2)-methylguanosine(1516) in 16S rRNA + S-adenosyl-L-homocysteine + H(+). Functionally, specifically methylates the guanosine in position 1516 of 16S rRNA. The chain is Ribosomal RNA small subunit methyltransferase J from Salmonella paratyphi B (strain ATCC BAA-1250 / SPB7).